Reading from the N-terminus, the 192-residue chain is Phosphoheptose isomerase (192 aa).

Residues 36–192 form the SIS domain; sequence CVDSLAAGGK…DQVEAVAAPA (157 aa). A substrate-binding site is contributed by 51–53; the sequence is NGG. Histidine 60 and glutamate 64 together coordinate Zn(2+). Substrate-binding positions include glutamate 64, 93 to 94, 119 to 121, serine 124, and glutamine 171; these read ND and TTS. Glutamine 171 and histidine 179 together coordinate Zn(2+).

This sequence belongs to the SIS family. GmhA subfamily. As to quaternary structure, homotetramer. Requires Zn(2+) as cofactor.

The protein localises to the cytoplasm. It carries out the reaction 2 D-sedoheptulose 7-phosphate = D-glycero-alpha-D-manno-heptose 7-phosphate + D-glycero-beta-D-manno-heptose 7-phosphate. It functions in the pathway carbohydrate biosynthesis; D-glycero-D-manno-heptose 7-phosphate biosynthesis; D-glycero-alpha-D-manno-heptose 7-phosphate and D-glycero-beta-D-manno-heptose 7-phosphate from sedoheptulose 7-phosphate: step 1/1. Functionally, catalyzes the isomerization of sedoheptulose 7-phosphate in D-glycero-D-manno-heptose 7-phosphate. In Paramagnetospirillum magneticum (strain ATCC 700264 / AMB-1) (Magnetospirillum magneticum), this protein is Phosphoheptose isomerase.